A 261-amino-acid polypeptide reads, in one-letter code: MDWGTLHTFVGGVNKHSTSIGKVWVTVLFVFRVMILVVAAQEVWGDEQEDFVCNTLQPGCRNVCYDHFFPVSHIRLWALQLIFVSTPALLVAMHVAYYRHEAARRFRRGETRSEFKDLEDIKRQKVRIEGSLWWTYTSSIFFRIVFEAAFMYVFYFLYNGYHLPWVLKCGIQPCPNLVDCFISRPTEKTVFTIFMISASVICMLLNVAELCYLLLKVCFRRSKRAQTQKAPPNHALKESKQNEMNELISEGGQNAITGFPS.

The Cytoplasmic segment spans residues 1-22 (MDWGTLHTFVGGVNKHSTSIGK). Residues 23-45 (VWVTVLFVFRVMILVVAAQEVWG) form a helical membrane-spanning segment. The Extracellular segment spans residues 46 to 75 (DEQEDFVCNTLQPGCRNVCYDHFFPVSHIR). Residues 76–98 (LWALQLIFVSTPALLVAMHVAYY) form a helical membrane-spanning segment. Over 99–131 (RHEAARRFRRGETRSEFKDLEDIKRQKVRIEGS) the chain is Cytoplasmic. Residues 132–154 (LWWTYTSSIFFRIVFEAAFMYVF) traverse the membrane as a helical segment. The Extracellular segment spans residues 155-192 (YFLYNGYHLPWVLKCGIQPCPNLVDCFISRPTEKTVFT). A helical membrane pass occupies residues 193 to 215 (IFMISASVICMLLNVAELCYLLL). Over 216-261 (KVCFRRSKRAQTQKAPPNHALKESKQNEMNELISEGGQNAITGFPS) the chain is Cytoplasmic.

The protein belongs to the connexin family. Beta-type (group I) subfamily. A connexon is composed of a hexamer of connexins. Interacts with CNST.

Its subcellular location is the cell membrane. It localises to the cell junction. The protein resides in the gap junction. Its function is as follows. One gap junction consists of a cluster of closely packed pairs of transmembrane channels, the connexons, through which materials of low MW diffuse from one cell to a neighboring cell. This chain is Gap junction beta-6 protein (GJB6), found in Bos taurus (Bovine).